A 113-amino-acid chain; its full sequence is Mini zinc finger protein 2 (113 aa).

The segment at 24–83 (YGECRRNHAASTGGHAVDGCREFIAAEDGGGGNSTSAVGVAAAALKCAACGCHRSFHRRV) adopts a ZF-HD dimerization-type; degenerate zinc-finger fold. A disordered region spans residues 93–113 (DCASGDTSSSSPSSSSSLSSE). Residues 100 to 113 (SSSSPSSSSSLSSE) show a composition bias toward low complexity.

As to quaternary structure, homo- and heterodimers.

It is found in the cytoplasm. Functionally, inhibits zinc finger homeodomain (ZHD) transcription factors, by interacting with them to prevent both their nuclear localization and their DNA-binding properties. In Oryza sativa subsp. japonica (Rice), this protein is Mini zinc finger protein 2 (MIF3).